The following is a 232-amino-acid chain: Ion-translocating oxidoreductase complex subunit E (232 aa).

A run of 6 helical transmembrane segments spans residues 18 to 38 (GLVQLLGLCPLLAVTATLTNA), 39 to 59 (LGLGLATVAVLIGSNVLVSLV), 69 to 89 (IPVFVMIIAALVTVVQLVINA), 93 to 113 (GLYLSLGIFLPLIVTNCVIIG), 128 to 148 (AFDGLMMGTGFTAVLAVLGAV), and 182 to 202 (SFLLAMLPPGAFIAMGLLIAG).

This sequence belongs to the NqrDE/RnfAE family. In terms of assembly, the complex is composed of six subunits: RnfA, RnfB, RnfC, RnfD, RnfE and RnfG.

The protein resides in the cell inner membrane. Part of a membrane-bound complex that couples electron transfer with translocation of ions across the membrane. This chain is Ion-translocating oxidoreductase complex subunit E, found in Shewanella amazonensis (strain ATCC BAA-1098 / SB2B).